The primary structure comprises 184 residues: Glutathione-regulated potassium-efflux system ancillary protein KefG (184 aa).

This sequence belongs to the NAD(P)H dehydrogenase (quinone) family. KefG subfamily. Interacts with KefB.

The protein localises to the cell inner membrane. The catalysed reaction is a quinone + NADH + H(+) = a quinol + NAD(+). It catalyses the reaction a quinone + NADPH + H(+) = a quinol + NADP(+). Regulatory subunit of a potassium efflux system that confers protection against electrophiles. Required for full activity of KefB. The polypeptide is Glutathione-regulated potassium-efflux system ancillary protein KefG (Erwinia tasmaniensis (strain DSM 17950 / CFBP 7177 / CIP 109463 / NCPPB 4357 / Et1/99)).